Reading from the N-terminus, the 61-residue chain is Large ribosomal subunit protein bL28 (61 aa).

Belongs to the bacterial ribosomal protein bL28 family.

The polypeptide is Large ribosomal subunit protein bL28 (Lactobacillus johnsonii (strain CNCM I-12250 / La1 / NCC 533)).